Here is a 749-residue protein sequence, read N- to C-terminus: Amyloid-beta A4 precursor protein-binding family A member 2 (749 aa).

Disordered regions lie at residues Met-1–Glu-94 and Asp-130–Pro-343. A Phosphoserine modification is found at Ser-11. Over residues Gly-70 to Thr-80 the composition is skewed to polar residues. Acidic residues-rich tracts occupy residues Ser-81–Glu-94 and Thr-131–Thr-142. The tract at residues His-185–Ala-270 is STXBP1-binding. A Phosphoserine modification is found at Ser-208. Residues Asp-218–Asp-227 show a composition bias toward acidic residues. Positions Leu-237–Glu-247 are enriched in polar residues. A compositionally biased stretch (basic and acidic residues) spans Arg-305 to His-315. In terms of domain architecture, PID spans Leu-366–Asp-555. PDZ domains follow at residues Glu-568–Ser-653 and Thr-659–Ala-735.

Part of a multimeric complex containing STXBP1 and syntaxin-1. Binds to the cytoplasmic domain of amyloid-beta protein, and to the nuclear factor NF-kappa-B/p65 via its PDZ domain. Interacts with the N-terminal domain of NECAB3.

Functionally, putative function in synaptic vesicle exocytosis by binding to STXBP1, an essential component of the synaptic vesicle exocytotic machinery. May modulate processing of the amyloid-beta precursor protein (APP) and hence formation of APP-beta. The chain is Amyloid-beta A4 precursor protein-binding family A member 2 (APBA2) from Pongo abelii (Sumatran orangutan).